A 632-amino-acid polypeptide reads, in one-letter code: tRNA 5-methylaminomethyl-2-thiouridine biosynthesis bifunctional protein MnmC (632 aa).

The tRNA (mnm(5)s(2)U34)-methyltransferase stretch occupies residues 1–247; it reads MNSRIFPAAM…KWHMTLGQRL (247 aa). The FAD-dependent cmnm(5)s(2)U34 oxidoreductase stretch occupies residues 267-632; sequence VGAGLAGAAV…TDLLAQIAPR (366 aa).

In the N-terminal section; belongs to the methyltransferase superfamily. tRNA (mnm(5)s(2)U34)-methyltransferase family. This sequence in the C-terminal section; belongs to the DAO family. Requires FAD as cofactor.

The protein resides in the cytoplasm. It carries out the reaction 5-aminomethyl-2-thiouridine(34) in tRNA + S-adenosyl-L-methionine = 5-methylaminomethyl-2-thiouridine(34) in tRNA + S-adenosyl-L-homocysteine + H(+). Catalyzes the last two steps in the biosynthesis of 5-methylaminomethyl-2-thiouridine (mnm(5)s(2)U) at the wobble position (U34) in tRNA. Catalyzes the FAD-dependent demodification of cmnm(5)s(2)U34 to nm(5)s(2)U34, followed by the transfer of a methyl group from S-adenosyl-L-methionine to nm(5)s(2)U34, to form mnm(5)s(2)U34. This is tRNA 5-methylaminomethyl-2-thiouridine biosynthesis bifunctional protein MnmC from Bordetella bronchiseptica (strain ATCC BAA-588 / NCTC 13252 / RB50) (Alcaligenes bronchisepticus).